Here is an 85-residue protein sequence, read N- to C-terminus: MKFCVAVSLLIIASMAGVISVSGYDVYPRDYAENYYYCGVRKDPDCSKICKLHGARVGYCHVKRCSCVDLPEKNQNFLSVIWKHC.

Residues 1-23 (MKFCVAVSLLIIASMAGVISVSG) form the signal peptide. In terms of domain architecture, LCN-type CS-alpha/beta spans 24-85 (YDVYPRDYAE…NFLSVIWKHC (62 aa)). Intrachain disulfides connect cysteine 38/cysteine 60, cysteine 46/cysteine 65, and cysteine 50/cysteine 67.

Belongs to the long (3 C-C) scorpion toxin superfamily. In terms of tissue distribution, expressed by the venom gland.

The protein localises to the secreted. The polypeptide is Neurtoxin 10 (Lychas mucronatus (Chinese swimming scorpion)).